Reading from the N-terminus, the 118-residue chain is Small ribosomal subunit protein uS13 (118 aa).

Positions 94 to 118 (SLPLRGQRTKTNARTRKGPRKPIKR) are disordered.

The protein belongs to the universal ribosomal protein uS13 family. Part of the 30S ribosomal subunit. Forms a loose heterodimer with protein S19. Forms two bridges to the 50S subunit in the 70S ribosome.

Its function is as follows. Located at the top of the head of the 30S subunit, it contacts several helices of the 16S rRNA. In the 70S ribosome it contacts the 23S rRNA (bridge B1a) and protein L5 of the 50S subunit (bridge B1b), connecting the 2 subunits; these bridges are implicated in subunit movement. Contacts the tRNAs in the A and P-sites. This chain is Small ribosomal subunit protein uS13, found in Photobacterium profundum (strain SS9).